The chain runs to 257 residues: Pyridoxine 5'-phosphate synthase (257 aa).

N6 serves as a coordination point for 3-amino-2-oxopropyl phosphate. D8–H9 provides a ligand contact to 1-deoxy-D-xylulose 5-phosphate. R17 serves as a coordination point for 3-amino-2-oxopropyl phosphate. The active-site Proton acceptor is H41. 2 residues coordinate 1-deoxy-D-xylulose 5-phosphate: R43 and H48. E68 functions as the Proton acceptor in the catalytic mechanism. 1-deoxy-D-xylulose 5-phosphate is bound at residue T98. H210 serves as the catalytic Proton donor. 3-amino-2-oxopropyl phosphate contacts are provided by residues G211 and G232–Q233.

The protein belongs to the PNP synthase family. In terms of assembly, homooctamer; tetramer of dimers.

It is found in the cytoplasm. It catalyses the reaction 3-amino-2-oxopropyl phosphate + 1-deoxy-D-xylulose 5-phosphate = pyridoxine 5'-phosphate + phosphate + 2 H2O + H(+). The protein operates within cofactor biosynthesis; pyridoxine 5'-phosphate biosynthesis; pyridoxine 5'-phosphate from D-erythrose 4-phosphate: step 5/5. Its function is as follows. Catalyzes the complicated ring closure reaction between the two acyclic compounds 1-deoxy-D-xylulose-5-phosphate (DXP) and 3-amino-2-oxopropyl phosphate (1-amino-acetone-3-phosphate or AAP) to form pyridoxine 5'-phosphate (PNP) and inorganic phosphate. This chain is Pyridoxine 5'-phosphate synthase, found in Campylobacter jejuni (strain RM1221).